Reading from the N-terminus, the 1382-residue chain is Hepatocyte growth factor receptor (1382 aa).

Positions 1-24 (MRAPAVLAPGILVLLFTLVQRSCG) are cleaved as a signal peptide. The Extracellular segment spans residues 25–933 (ECKEALVKSE…VIVQPDQNFT (909 aa)). The 490-residue stretch at 27-516 (KEALVKSEMN…TGKKITKIPL (490 aa)) folds into the Sema domain. N-linked (GlcNAc...) asparagine glycosylation occurs at Asn45. 4 disulfide bridges follow: Cys95–Cys101, Cys98–Cys160, Cys133–Cys141, and Cys173–Cys176. Residue Asn106 is glycosylated (N-linked (GlcNAc...) asparagine). Asn203 and Asn359 each carry an N-linked (GlcNAc...) asparagine glycan. Cystine bridges form between Cys299–Cys364 and Cys386–Cys398. N-linked (GlcNAc...) asparagine glycosylation is found at Asn400 and Asn406. Disulfide bonds link Cys521-Cys539, Cys527-Cys562, Cys530-Cys546, and Cys542-Cys552. 3 IPT/TIG domains span residues 564 to 656 (PTIY…FSYV), 658 to 740 (PIIT…FSYQ), and 743 to 837 (PIVY…LIYV). The O-linked (Man) threonine glycan is linked to Thr583. N-linked (GlcNAc...) asparagine glycans are attached at residues Asn608 and Asn636. O-linked (Man) threonine glycans are attached at residues Thr677 and Thr762. N-linked (GlcNAc...) asparagine glycans are attached at residues Asn786, Asn880, and Asn931. Residues 934–956 (GLIVGVISISLIVLLLLGLFLWL) form a helical membrane-spanning segment. The Cytoplasmic portion of the chain corresponds to 957-1382 (KRRKQIKDLG…QDIIDGEGDT (426 aa)). Residue Ser967 is modified to Phosphoserine. Thr978 carries the phosphothreonine modification. Ser991, Ser998, and Ser1001 each carry phosphoserine. Residue Tyr1004 is modified to Phosphotyrosine. The region spanning 1079-1346 (VHFNEVIGRG…RISAIFSTFI (268 aa)) is the Protein kinase domain. Residues 1085–1093 (IGRGHFGCV) and Lys1111 each bind ATP. Asp1205 (proton acceptor) is an active-site residue. Residues 1213 to 1382 (LDEKFTVKVA…QDIIDGEGDT (170 aa)) are interaction with RANBP9. A Phosphotyrosine modification is found at Tyr1231. 2 positions are modified to phosphotyrosine; by autocatalysis: Tyr1235 and Tyr1236. Thr1290 is subject to Phosphothreonine. The interaction with MUC20 stretch occupies residues 1321 to 1360 (WHPKAELRPSFSELVSRISAIFSTFIGEHYVHVNATYVNV). Tyr1350 and Tyr1357 each carry phosphotyrosine; by autocatalysis. Tyr1366 carries the post-translational modification Phosphotyrosine.

This sequence belongs to the protein kinase superfamily. Tyr protein kinase family. As to quaternary structure, heterodimer made of an alpha chain (50 kDa) and a beta chain (145 kDa) which are disulfide linked. Binds PLXNB1. Interacts when phosphorylated with downstream effectors including STAT3, PIK3R1, SRC, PCLG1, GRB2 and GAB1. Interacts with SPSB1, SPSB2 and SPSB4. Interacts with INPP5D/SHIP1. When phosphorylated at Tyr-1357, interacts with INPPL1/SHIP2. Interacts with RANBP9 and RANBP10, as well as SPSB1, SPSB2, SPSB3 and SPSB4. SPSB1 binding occurs in the presence and in the absence of HGF, however HGF treatment has a positive effect on this interaction. Interacts with MUC20; prevents interaction with GRB2 and suppresses hepatocyte growth factor-induced cell proliferation. Interacts with GRB10. Interacts with PTPN1 and PTPN2. Interacts with HSP90AA1 and HSP90AB1; the interaction suppresses MET kinase activity. Interacts with tensin TNS3. Interacts (when phosphorylated) with tensin TNS4 (via SH2 domain); the interaction increases MET protein stability by inhibiting MET endocytosis and subsequent lysosomal degradation. Post-translationally, autophosphorylated in response to ligand binding on Tyr-1235 and Tyr-1236 in the kinase domain leading to further phosphorylation of Tyr-1350 and Tyr-1357 in the C-terminal multifunctional docking site. Dephosphorylated by PTPRJ at Tyr-1350 and Tyr-1366. Dephosphorylated by PTPN1 and PTPN2. In terms of processing, ubiquitinated. Ubiquitination by CBL regulates the receptor stability and activity through proteasomal degradation. O-mannosylation of IPT/TIG domains by TMEM260 is required for protein maturation. O-mannosylated residues are composed of single mannose glycans that are not elongated or modified.

Its subcellular location is the membrane. It catalyses the reaction L-tyrosyl-[protein] + ATP = O-phospho-L-tyrosyl-[protein] + ADP + H(+). In its inactive state, the C-terminal tail interacts with the catalytic domain and inhibits the kinase activity. Upon ligand binding, the C-terminal tail is displaced and becomes phosphorylated, thus increasing the kinase activity. In terms of biological role, receptor tyrosine kinase that transduces signals from the extracellular matrix into the cytoplasm by binding to hepatocyte growth factor/HGF ligand. Regulates many physiological processes including proliferation, scattering, morphogenesis and survival. Ligand binding at the cell surface induces autophosphorylation of MET on its intracellular domain that provides docking sites for downstream signaling molecules. Following activation by ligand, interacts with the PI3-kinase subunit PIK3R1, PLCG1, SRC, GRB2, STAT3 or the adapter GAB1. Recruitment of these downstream effectors by MET leads to the activation of several signaling cascades including the RAS-ERK, PI3 kinase-AKT, or PLCgamma-PKC. The RAS-ERK activation is associated with the morphogenetic effects while PI3K/AKT coordinates prosurvival effects. During embryonic development, MET signaling plays a role in gastrulation, development and migration of muscles and neuronal precursors, angiogenesis and kidney formation. In adults, participates in wound healing as well as organ regeneration and tissue remodeling. Also promotes differentiation and proliferation of hematopoietic cells. The chain is Hepatocyte growth factor receptor (MET) from Mustela putorius furo (European domestic ferret).